The sequence spans 409 residues: tRNA(Met) cytidine acetate ligase (409 aa).

ATP contacts are provided by residues 7-20 (VVEY…HLHH), Gly-102, Asn-169, and Arg-194.

Belongs to the TmcAL family.

It localises to the cytoplasm. The catalysed reaction is cytidine(34) in elongator tRNA(Met) + acetate + ATP = N(4)-acetylcytidine(34) in elongator tRNA(Met) + AMP + diphosphate. Catalyzes the formation of N(4)-acetylcytidine (ac(4)C) at the wobble position of elongator tRNA(Met), using acetate and ATP as substrates. First activates an acetate ion to form acetyladenylate (Ac-AMP) and then transfers the acetyl group to tRNA to form ac(4)C34. The polypeptide is tRNA(Met) cytidine acetate ligase (Clostridium botulinum (strain Loch Maree / Type A3)).